The following is a 793-amino-acid chain: Putative glutamate--cysteine ligase 2-3 (793 aa).

Positions 1–407 are carboxylate-amine ligase; sequence MLASDPRKVG…RFWDRGDTAD (407 aa). The disordered stretch occupies residues 367-390; that stretch reads TEHLPDVEVPPPREPGPKSTGAGR. A peptidase M20 region spans residues 408–793; it reads MTWTESTELD…ALTRLEDQSG (386 aa).

It in the C-terminal section; belongs to the glutamate--cysteine ligase type 2 family. YbdK subfamily.

It carries out the reaction L-cysteine + L-glutamate + ATP = gamma-L-glutamyl-L-cysteine + ADP + phosphate + H(+). In terms of biological role, ATP-dependent carboxylate-amine ligase which exhibits weak glutamate--cysteine ligase activity. This chain is Putative glutamate--cysteine ligase 2-3, found in Rhodococcus jostii (strain RHA1).